Consider the following 486-residue polypeptide: Keratin, type II cuticular Hb6 (486 aa).

The head stretch occupies residues 1–106 (MTCGSYCGGR…PNAQCVKHEE (106 aa)). Residues 106–417 (EKEQIKCLNS…RLLEGEEQRL (312 aa)) form the IF rod domain. A coil 1A region spans residues 107-141 (KEQIKCLNSKFAAFIDKVRFLEQQNKLLETKWQFY). The tract at residues 142–151 (QNRKCCESNM) is linker 1. The segment at 152–252 (EPLFEGYIEA…YDEETRILHS (101 aa)) is coil 1B. A Glycyl lysine isopeptide (Lys-Gly) (interchain with G-Cter in SUMO1) cross-link involves residue Lys-212. Positions 253 to 269 (HISDTSIVVKMDNSRDL) are linker 12. The coil 2 stretch occupies residues 270 to 413 (NMDCVVAEIK…TTYRRLLEGE (144 aa)). The interval 414–486 (EQRLCEGVGS…GACSGGCKKC (73 aa)) is tail.

This sequence belongs to the intermediate filament family. As to quaternary structure, heterotetramer of two type I and two type II keratins.

This chain is Keratin, type II cuticular Hb6 (Krt86), found in Mus musculus (Mouse).